A 790-amino-acid chain; its full sequence is RNA-directed RNA polymerase 2a (790 aa).

In terms of domain architecture, RdRp catalytic spans 524-639 (FHFKEIDFSK…GTVEELPRDQ (116 aa)). Positions 771–790 (IKPRRVKKSHSDARSRARRA) are disordered. Positions 779–790 (SHSDARSRARRA) are enriched in basic and acidic residues.

Belongs to the bromoviridae 2a family. As to quaternary structure, interacts with replication protein 1a.

The enzyme catalyses RNA(n) + a ribonucleoside 5'-triphosphate = RNA(n+1) + diphosphate. In terms of biological role, RNA-dependent RNA polymerase which replicates the viral genome composed of 3 RNA segments, RNA1, RNA2 and RNA3. This chain is RNA-directed RNA polymerase 2a, found in Alfalfa mosaic virus (AMV).